Here is a 982-residue protein sequence, read N- to C-terminus: Serine/threonine-protein kinase PknD (982 aa).

The 292-residue stretch at 51–342 folds into the Protein kinase domain; it reads YQIIKSIGKG…ELIRDIENYL (292 aa). ATP is bound by residues 57 to 65 and Lys80; that span reads IGKGGMGEV. The Proton acceptor role is filled by Asp186.

Belongs to the protein kinase superfamily. Ser/Thr protein kinase family. In terms of processing, autophosphorylated on serine and threonine residues.

The enzyme catalyses L-seryl-[protein] + ATP = O-phospho-L-seryl-[protein] + ADP + H(+). It catalyses the reaction L-threonyl-[protein] + ATP = O-phospho-L-threonyl-[protein] + ADP + H(+). Functionally, together with the serine/threonine kinase Pkn1, may play a role in the specific interactions with host proteins during intracellular growth. This Protochlamydia amoebophila (strain UWE25) protein is Serine/threonine-protein kinase PknD.